A 678-amino-acid chain; its full sequence is UvrABC system protein C (678 aa).

Positions 16–95 (VEPGVYRFRD…IKEFDPRFNI (80 aa)) constitute a GIY-YIG domain. Residues 208–243 (DRLIREMEQQMNAAAEELDFERAARLRDNIGAMRRA) form the UVR domain. The segment at 477-508 (HLRDAEAAPEGRPEQGPRASARPEQGPRASAR) is disordered. Basic and acidic residues predominate over residues 479–491 (RDAEAAPEGRPEQ).

This sequence belongs to the UvrC family. As to quaternary structure, interacts with UvrB in an incision complex.

The protein resides in the cytoplasm. Functionally, the UvrABC repair system catalyzes the recognition and processing of DNA lesions. UvrC both incises the 5' and 3' sides of the lesion. The N-terminal half is responsible for the 3' incision and the C-terminal half is responsible for the 5' incision. This Mycolicibacterium vanbaalenii (strain DSM 7251 / JCM 13017 / BCRC 16820 / KCTC 9966 / NRRL B-24157 / PYR-1) (Mycobacterium vanbaalenii) protein is UvrABC system protein C.